The primary structure comprises 490 residues: GTPase Der (490 aa).

2 consecutive EngA-type G domains span residues 3–166 (PVVA…MEDL) and 203–376 (IKLA…DSST). Residues 9-16 (GRPNVGKS), 56-60 (DTGGI), 118-121 (NKTD), 209-216 (GRPNVGKS), 256-260 (DTAGV), and 321-324 (NKWD) contribute to the GTP site. The KH-like domain maps to 377–461 (RRVGTSMLTR…PIRIQFKEGE (85 aa)).

It belongs to the TRAFAC class TrmE-Era-EngA-EngB-Septin-like GTPase superfamily. EngA (Der) GTPase family. In terms of assembly, associates with the 50S ribosomal subunit.

In terms of biological role, GTPase that plays an essential role in the late steps of ribosome biogenesis. This is GTPase Der from Escherichia fergusonii (strain ATCC 35469 / DSM 13698 / CCUG 18766 / IAM 14443 / JCM 21226 / LMG 7866 / NBRC 102419 / NCTC 12128 / CDC 0568-73).